The primary structure comprises 708 residues: UvrABC system protein B (708 aa).

Residues 32–419 (EGIQSGKTAQ…GGEVVEQIIR (388 aa)) form the Helicase ATP-binding domain. Residue 45–52 (GATGTGKT) coordinates ATP. Residues 98 to 121 (YYDYYQPEAYIPQRDVYIEKDSSI) carry the Beta-hairpin motif. Positions 436–598 (QVTHLLEQVR…IVPKTVRKSI (163 aa)) constitute a Helicase C-terminal domain. The 36-residue stretch at 627–662 (IEYVDKLEQEMLAAAEDLEFERAARLRDRVLQLKEH) folds into the UVR domain. A disordered region spans residues 668–708 (SEVEIVDEKSAGKSGGRGRGRRGAKKKGASKGTKIPRPKRG). The span at 683 to 708 (GRGRGRRGAKKKGASKGTKIPRPKRG) shows a compositional bias: basic residues.

Belongs to the UvrB family. Forms a heterotetramer with UvrA during the search for lesions. Interacts with UvrC in an incision complex.

The protein resides in the cytoplasm. Functionally, the UvrABC repair system catalyzes the recognition and processing of DNA lesions. A damage recognition complex composed of 2 UvrA and 2 UvrB subunits scans DNA for abnormalities. Upon binding of the UvrA(2)B(2) complex to a putative damaged site, the DNA wraps around one UvrB monomer. DNA wrap is dependent on ATP binding by UvrB and probably causes local melting of the DNA helix, facilitating insertion of UvrB beta-hairpin between the DNA strands. Then UvrB probes one DNA strand for the presence of a lesion. If a lesion is found the UvrA subunits dissociate and the UvrB-DNA preincision complex is formed. This complex is subsequently bound by UvrC and the second UvrB is released. If no lesion is found, the DNA wraps around the other UvrB subunit that will check the other stand for damage. The protein is UvrABC system protein B of Rhodopirellula baltica (strain DSM 10527 / NCIMB 13988 / SH1).